A 225-amino-acid polypeptide reads, in one-letter code: UPF0173 metal-dependent hydrolase Pisl_0803 (225 aa).

It belongs to the UPF0173 family.

In Pyrobaculum islandicum (strain DSM 4184 / JCM 9189 / GEO3), this protein is UPF0173 metal-dependent hydrolase Pisl_0803.